The chain runs to 116 residues: MRHQLRIPLLSKPADQRKALLRGLTTQLIREGRVTTTKARAKALRNETERMISLAKEGTLAARRRAIGYIYDKKLVHSLFEKAQERYGDRNGGYTRIVRTVARKGDNAQMAIIELV.

This sequence belongs to the bacterial ribosomal protein bL17 family. In terms of assembly, part of the 50S ribosomal subunit. Contacts protein L32.

In Prochlorococcus marinus (strain MIT 9515), this protein is Large ribosomal subunit protein bL17.